We begin with the raw amino-acid sequence, 703 residues long: Elongation factor G (703 aa).

Residues 7-287 enclose the tr-type G domain; the sequence is KFTRNIGIAA…AVMRYLPSPA (281 aa). GTP contacts are provided by residues 16-23, 84-88, and 138-141; these read AHIDAGKT, DTPGH, and NKMD.

Belongs to the TRAFAC class translation factor GTPase superfamily. Classic translation factor GTPase family. EF-G/EF-2 subfamily.

The protein resides in the cytoplasm. Its function is as follows. Catalyzes the GTP-dependent ribosomal translocation step during translation elongation. During this step, the ribosome changes from the pre-translocational (PRE) to the post-translocational (POST) state as the newly formed A-site-bound peptidyl-tRNA and P-site-bound deacylated tRNA move to the P and E sites, respectively. Catalyzes the coordinated movement of the two tRNA molecules, the mRNA and conformational changes in the ribosome. This chain is Elongation factor G, found in Christiangramia forsetii (strain DSM 17595 / CGMCC 1.15422 / KT0803) (Gramella forsetii).